A 190-amino-acid polypeptide reads, in one-letter code: MSLISRLRAVVAGDDYLDGDYDDLDYDAGEHDDSPQAMASASSALAPLDAANPFDMDQGFSGSNVIGMPGISSSAAEVSLMEPRSFDEMPRAIQALRERKTVILNLTMMEPDQAQRAVDFVAGGTFAIDGHQERVGESIFLFAPSCVTVTNSAHEEASTPTVVTKDVEQASAEASVAPAPAWAAPGAAAL.

The protein belongs to the SepF family. As to quaternary structure, homodimer. Interacts with FtsZ.

Its subcellular location is the cytoplasm. In terms of biological role, cell division protein that is part of the divisome complex and is recruited early to the Z-ring. Probably stimulates Z-ring formation, perhaps through the cross-linking of FtsZ protofilaments. Its function overlaps with FtsA. The sequence is that of Cell division protein SepF from Synechococcus sp. (strain WH7803).